A 37-amino-acid chain; its full sequence is Large ribosomal subunit protein bL36 (37 aa).

This sequence belongs to the bacterial ribosomal protein bL36 family.

This chain is Large ribosomal subunit protein bL36, found in Janthinobacterium sp. (strain Marseille) (Minibacterium massiliensis).